Reading from the N-terminus, the 287-residue chain is U-megalopygitoxin(8)-Mc8 (287 aa).

Residues 1–17 form the signal peptide; the sequence is MYLQYLVLSLFSTTVYG.

It belongs to the caterpillar 8 family. In terms of processing, contains 2 disulfide bonds. Expressed by the venom apparatus.

The protein resides in the secreted. Probable toxin. The polypeptide is U-megalopygitoxin(8)-Mc8 (Megalopyge crispata (Black-waved flannel moth)).